The sequence spans 100 residues: Urease subunit gamma (100 aa).

Belongs to the urease gamma subunit family. In terms of assembly, heterotrimer of UreA (gamma), UreB (beta) and UreC (alpha) subunits. Three heterotrimers associate to form the active enzyme.

It localises to the cytoplasm. The enzyme catalyses urea + 2 H2O + H(+) = hydrogencarbonate + 2 NH4(+). The protein operates within nitrogen metabolism; urea degradation; CO(2) and NH(3) from urea (urease route): step 1/1. The chain is Urease subunit gamma from Pseudomonas syringae pv. tomato (strain ATCC BAA-871 / DC3000).